A 104-amino-acid polypeptide reads, in one-letter code: Large ribosomal subunit protein bL21 (104 aa).

Belongs to the bacterial ribosomal protein bL21 family. In terms of assembly, part of the 50S ribosomal subunit. Contacts protein L20.

This protein binds to 23S rRNA in the presence of protein L20. The chain is Large ribosomal subunit protein bL21 from Francisella tularensis subsp. holarctica (strain FTNF002-00 / FTA).